Consider the following 179-residue polypeptide: Apolipophorin-3b (179 aa).

The first 16 residues, 1–16, serve as a signal peptide directing secretion; it reads MNTLLAVLMLAVAAQA. 12 consecutive repeats follow at residues 30–40, 41–52, 53–60, 61–78, 79–89, 90–99, 100–113, 114–127, 128–140, 141–151, 152–165, and 166–179; these read VQQLNHTIVNA, AHELHETLGLPT, PDEALNLL, TEQANAFKTKIAEVTTSL, KQEAEKHQGSV, AEQLNRFARN, LNNSIHDAATSAQP, ADQLNSLQSALTNV, GHQWQTSQPRPSV, AQEAWAPVQSA, LQEAAEKTKEAAAN, and LQNSIQSAVQKPAN. Asn34 carries N-linked (GlcNAc...) asparagine glycosylation. N-linked (GlcNAc...) asparagine glycosylation occurs at Asn101. The interval 152–179 is disordered; it reads LQEAAEKTKEAAANLQNSIQSAVQKPAN. Over residues 165–179 the composition is skewed to polar residues; sequence NLQNSIQSAVQKPAN.

This sequence belongs to the insect apolipophorin-3 family. In terms of assembly, equilibrium between a soluble monomer and a bound lipoprotein form. Apolipophorin-3 associates with lipophorin during lipid loading until each particle contains 14 molecules of apolipophorin-3 in L.migratoria (5 molecules of apolipophorin-3a and 9 of apolipophorin-3b). As to expression, hemolymph.

The protein resides in the secreted. Functionally, assists in the loading of diacylglycerol, generated from triacylglycerol stores in the fat body through the action of adipokinetic hormone, into lipophorin, the hemolymph lipoprotein. It increases the lipid carrying capacity of lipophorin by covering the expanding hydrophobic surface resulting from diacylglycerol uptake. It thus plays a critical role in the transport of lipids during flight in several species of insects. The polypeptide is Apolipophorin-3b (Locusta migratoria (Migratory locust)).